The following is a 277-amino-acid chain: Protein CIMAP1D (277 aa).

STPGR repeat units lie at residues 122-148 (PGPGAYSPEKAPPVRQRNAPAFTLGSR), 202-227 (PGPGQYESPDPNTYRQRRPAFSILGR), and 238-263 (PGPGTHNPEQVTVNRARAPAYTMGIR). Residues 181-277 (PSYTVVGRTP…ASTMVGDTKC (97 aa)) are disordered.

Belongs to the CIMAP family.

This Mus musculus (Mouse) protein is Protein CIMAP1D (Cimap1d).